A 505-amino-acid polypeptide reads, in one-letter code: 2,3-bisphosphoglycerate-independent phosphoglycerate mutase (505 aa).

Mn(2+) contacts are provided by Asp-13 and Ser-63. Ser-63 functions as the Phosphoserine intermediate in the catalytic mechanism. Substrate contacts are provided by residues His-124, 153–154 (RD), Arg-183, Arg-189, 254–257 (RADR), and Lys-330. Positions 396, 400, 437, 438, and 456 each coordinate Mn(2+).

This sequence belongs to the BPG-independent phosphoglycerate mutase family. Monomer. Mn(2+) serves as cofactor.

The catalysed reaction is (2R)-2-phosphoglycerate = (2R)-3-phosphoglycerate. The protein operates within carbohydrate degradation; glycolysis; pyruvate from D-glyceraldehyde 3-phosphate: step 3/5. In terms of biological role, catalyzes the interconversion of 2-phosphoglycerate and 3-phosphoglycerate. This chain is 2,3-bisphosphoglycerate-independent phosphoglycerate mutase, found in Ruegeria pomeroyi (strain ATCC 700808 / DSM 15171 / DSS-3) (Silicibacter pomeroyi).